Here is a 64-residue protein sequence, read N- to C-terminus: Large ribosomal subunit protein uL30 (64 aa).

The protein belongs to the universal ribosomal protein uL30 family. In terms of assembly, part of the 50S ribosomal subunit.

The chain is Large ribosomal subunit protein uL30 from Methylorubrum populi (strain ATCC BAA-705 / NCIMB 13946 / BJ001) (Methylobacterium populi).